A 663-amino-acid chain; its full sequence is Protein MNE1 (663 aa).

The sequence is that of Protein MNE1 (MNE1) from Saccharomyces cerevisiae (strain ATCC 204508 / S288c) (Baker's yeast).